The primary structure comprises 117 residues: MKHLGKHLIMELWDCDKQALDNQAGVEKMLEDATNSCGATLICIRTHKFSPQGVTGVAVLAESHISIHTWPEIGYAAMDIFTCGEHVNPEDAIPAIRDFLKPAKFDIIDIKRGSMVE.

S63 acts as the Schiff-base intermediate with substrate; via pyruvic acid in catalysis. S63 is modified (pyruvic acid (Ser); by autocatalysis). Residue H68 is the Proton acceptor; for processing activity of the active site. C83 serves as the catalytic Proton donor; for catalytic activity.

This sequence belongs to the prokaryotic AdoMetDC family. Type 1 subfamily. Heterotetramer of two alpha and two beta chains arranged as a dimer of alpha/beta heterodimers. Pyruvate is required as a cofactor. Is synthesized initially as an inactive proenzyme. Formation of the active enzyme involves a self-maturation process in which the active site pyruvoyl group is generated from an internal serine residue via an autocatalytic post-translational modification. Two non-identical subunits are generated from the proenzyme in this reaction, and the pyruvate is formed at the N-terminus of the alpha chain, which is derived from the carboxyl end of the proenzyme. The post-translation cleavage follows an unusual pathway, termed non-hydrolytic serinolysis, in which the side chain hydroxyl group of the serine supplies its oxygen atom to form the C-terminus of the beta chain, while the remainder of the serine residue undergoes an oxidative deamination to produce ammonia and the pyruvoyl group blocking the N-terminus of the alpha chain.

The catalysed reaction is S-adenosyl-L-methionine + H(+) = S-adenosyl 3-(methylsulfanyl)propylamine + CO2. The protein operates within amine and polyamine biosynthesis; S-adenosylmethioninamine biosynthesis; S-adenosylmethioninamine from S-adenosyl-L-methionine: step 1/1. Catalyzes the decarboxylation of S-adenosylmethionine to S-adenosylmethioninamine (dcAdoMet), the propylamine donor required for the synthesis of the polyamines spermine and spermidine from the diamine putrescine. This chain is S-adenosylmethionine decarboxylase proenzyme, found in Methanococcus aeolicus (strain ATCC BAA-1280 / DSM 17508 / OCM 812 / Nankai-3).